Reading from the N-terminus, the 268-residue chain is Elongation factor Ts (268 aa).

The segment at 81 to 84 is involved in Mg(2+) ion dislocation from EF-Tu; sequence TDFV.

The protein belongs to the EF-Ts family.

It localises to the cytoplasm. In terms of biological role, associates with the EF-Tu.GDP complex and induces the exchange of GDP to GTP. It remains bound to the aminoacyl-tRNA.EF-Tu.GTP complex up to the GTP hydrolysis stage on the ribosome. In Buchnera aphidicola subsp. Acyrthosiphon pisum (strain 5A), this protein is Elongation factor Ts.